The following is a 603-amino-acid chain: NAD 5'-nucleotidase (603 aa).

Positions 1 to 25 are cleaved as a signal peptide; it reads MLLSKKSASFALSAFAMLFTSVALA. Zn(2+) is bound by residues D44, H46, D94, N126, and H227. Substrate-binding positions include R397, R437, F456, and 540–546; that span reads YVAGGKD.

This sequence belongs to the 5'-nucleotidase family. Requires Zn(2+) as cofactor.

Its subcellular location is the periplasm. The enzyme catalyses a ribonucleoside 5'-phosphate + H2O = a ribonucleoside + phosphate. Its function is as follows. Degrades NAD into adenosine and nicotinamide riboside, the latter being subsequently internalized by a specific permease. Also endowed with NAD(P) pyrophosphatase activity. Exhibits a broad substrate specificity, recognizing either mono- or dinucleotide nicotinamides and different adenosine phosphates with a maximal activity on 5'-adenosine monophosphate. The chain is NAD 5'-nucleotidase from Haemophilus influenzae (strain ATCC 51907 / DSM 11121 / KW20 / Rd).